A 567-amino-acid chain; its full sequence is Septation ring formation regulator EzrA (567 aa).

At 1 to 2 the chain is on the extracellular side; sequence ME. A helical membrane pass occupies residues 3–21; it reads IAVIVLLLLGGVMIYNHVY. At 22 to 567 the chain is on the cytoplasmic side; the sequence is RKKMYSEIDR…IFRDERSKEE (546 aa). Coiled-coil stretches lie at residues 97 to 188 and 254 to 465; these read RYAK…LTAS and REIV…LEEK.

It belongs to the EzrA family.

The protein localises to the cell membrane. Functionally, negative regulator of FtsZ ring formation; modulates the frequency and position of FtsZ ring formation. Inhibits FtsZ ring formation at polar sites. Interacts either with FtsZ or with one of its binding partners to promote depolymerization. This Geobacillus sp. (strain WCH70) protein is Septation ring formation regulator EzrA.